The following is a 155-amino-acid chain: Transcriptional regulator MraZ (155 aa).

SpoVT-AbrB domains are found at residues 5–52 (TYEN…SQDR) and 81–124 (SMNL…EPAA).

The protein belongs to the MraZ family. In terms of assembly, forms oligomers.

It localises to the cytoplasm. The protein resides in the nucleoid. In Pelagibacter ubique (strain HTCC1062), this protein is Transcriptional regulator MraZ.